Consider the following 333-residue polypeptide: MKSILEQLSSMTVVVADTGDLDSIKKFQPRDATTNPSLILAAAKNPDYVKLIDKAIESSENTLPNGFSEIELIKETVDQVSVFFGKEILKIISGRVSTEVDARLSFDTEATVKKARKLINLYKNFGIEKERILIKIAATWEGIKAAEILEKEGIKCNLTLLFNFCQAVTCANANITLISPFVGRILDWHKAKTGKTSFIGAEDPGVISVTQIYKYFKEKGFKTEVMGASFRNLDEIKELAGCDLLTIAPKFLEELKREKGVLIRKLDASTKINNSIDYKFEEKDFRLSMLEDQMASEKLSEGITGFSKAIEELEELLIERLSEMKNHKLISAN.

The active-site Schiff-base intermediate with substrate is Lys135.

The protein belongs to the transaldolase family. Type 1 subfamily. In terms of assembly, homodimer.

Its subcellular location is the cytoplasm. It carries out the reaction D-sedoheptulose 7-phosphate + D-glyceraldehyde 3-phosphate = D-erythrose 4-phosphate + beta-D-fructose 6-phosphate. It functions in the pathway carbohydrate degradation; pentose phosphate pathway; D-glyceraldehyde 3-phosphate and beta-D-fructose 6-phosphate from D-ribose 5-phosphate and D-xylulose 5-phosphate (non-oxidative stage): step 2/3. Transaldolase is important for the balance of metabolites in the pentose-phosphate pathway. In Prochlorococcus marinus (strain MIT 9312), this protein is Transaldolase.